A 555-amino-acid chain; its full sequence is 2-succinyl-5-enolpyruvyl-6-hydroxy-3-cyclohexene-1-carboxylate synthase (555 aa).

This sequence belongs to the TPP enzyme family. MenD subfamily. As to quaternary structure, homodimer. Requires Mg(2+) as cofactor. Mn(2+) is required as a cofactor. Thiamine diphosphate serves as cofactor.

The catalysed reaction is isochorismate + 2-oxoglutarate + H(+) = 5-enolpyruvoyl-6-hydroxy-2-succinyl-cyclohex-3-ene-1-carboxylate + CO2. Its pathway is quinol/quinone metabolism; 1,4-dihydroxy-2-naphthoate biosynthesis; 1,4-dihydroxy-2-naphthoate from chorismate: step 2/7. It participates in quinol/quinone metabolism; menaquinone biosynthesis. In terms of biological role, catalyzes the thiamine diphosphate-dependent decarboxylation of 2-oxoglutarate and the subsequent addition of the resulting succinic semialdehyde-thiamine pyrophosphate anion to isochorismate to yield 2-succinyl-5-enolpyruvyl-6-hydroxy-3-cyclohexene-1-carboxylate (SEPHCHC). This chain is 2-succinyl-5-enolpyruvyl-6-hydroxy-3-cyclohexene-1-carboxylate synthase, found in Bacteroides thetaiotaomicron (strain ATCC 29148 / DSM 2079 / JCM 5827 / CCUG 10774 / NCTC 10582 / VPI-5482 / E50).